The chain runs to 39 residues: Photosystem II reaction center protein J (39 aa).

A helical membrane pass occupies residues 7 to 27 (IPLWLIATVGGTAALTVVGLF).

It belongs to the PsbJ family. PSII is composed of 1 copy each of membrane proteins PsbA, PsbB, PsbC, PsbD, PsbE, PsbF, PsbH, PsbI, PsbJ, PsbK, PsbL, PsbM, PsbT, PsbX, PsbY, PsbZ, Psb30/Ycf12, at least 3 peripheral proteins of the oxygen-evolving complex and a large number of cofactors. It forms dimeric complexes.

The protein resides in the plastid. It localises to the chloroplast thylakoid membrane. One of the components of the core complex of photosystem II (PSII). PSII is a light-driven water:plastoquinone oxidoreductase that uses light energy to abstract electrons from H(2)O, generating O(2) and a proton gradient subsequently used for ATP formation. It consists of a core antenna complex that captures photons, and an electron transfer chain that converts photonic excitation into a charge separation. The polypeptide is Photosystem II reaction center protein J (Rhodomonas salina (Cryptomonas salina)).